A 360-amino-acid polypeptide reads, in one-letter code: Dihydroorotate dehydrogenase (quinone) (360 aa).

FMN contacts are provided by residues 66–70 (AGFDK) and Thr-90. Lys-70 is a substrate binding site. A substrate-binding site is contributed by 115–119 (NRMGF). 2 residues coordinate FMN: Asn-143 and Asn-176. Asn-176 provides a ligand contact to substrate. Ser-179 (nucleophile) is an active-site residue. Asn-181 lines the substrate pocket. FMN is bound by residues Lys-212 and Thr-240. 241–242 (NT) contacts substrate. Residues Gly-264, Gly-293, and 314–315 (YT) each bind FMN.

Belongs to the dihydroorotate dehydrogenase family. Type 2 subfamily. In terms of assembly, monomer. FMN is required as a cofactor.

It localises to the cell membrane. It catalyses the reaction (S)-dihydroorotate + a quinone = orotate + a quinol. The protein operates within pyrimidine metabolism; UMP biosynthesis via de novo pathway; orotate from (S)-dihydroorotate (quinone route): step 1/1. Functionally, catalyzes the conversion of dihydroorotate to orotate with quinone as electron acceptor. In Mycobacterium marinum (strain ATCC BAA-535 / M), this protein is Dihydroorotate dehydrogenase (quinone).